We begin with the raw amino-acid sequence, 347 residues long: Selenide, water dikinase (347 aa).

Cys17 is a catalytic residue. ATP is bound by residues Lys20 and 48–50 (TRD). Mg(2+) is bound at residue Asp51. Residues Asp68, Asp91, and 139–141 (GHS) contribute to the ATP site. Asp91 serves as a coordination point for Mg(2+). Mg(2+) is bound at residue Asp227.

It belongs to the selenophosphate synthase 1 family. Class I subfamily. In terms of assembly, homodimer. Mg(2+) serves as cofactor.

It catalyses the reaction hydrogenselenide + ATP + H2O = selenophosphate + AMP + phosphate + 2 H(+). Functionally, synthesizes selenophosphate from selenide and ATP. In Cronobacter sakazakii (strain ATCC BAA-894) (Enterobacter sakazakii), this protein is Selenide, water dikinase.